Reading from the N-terminus, the 273-residue chain is Ribosomal RNA small subunit methyltransferase A (273 aa).

Residues asparagine 18, leucine 20, glycine 45, glutamate 66, aspartate 91, and asparagine 113 each coordinate S-adenosyl-L-methionine.

This sequence belongs to the class I-like SAM-binding methyltransferase superfamily. rRNA adenine N(6)-methyltransferase family. RsmA subfamily.

It is found in the cytoplasm. It carries out the reaction adenosine(1518)/adenosine(1519) in 16S rRNA + 4 S-adenosyl-L-methionine = N(6)-dimethyladenosine(1518)/N(6)-dimethyladenosine(1519) in 16S rRNA + 4 S-adenosyl-L-homocysteine + 4 H(+). Functionally, specifically dimethylates two adjacent adenosines (A1518 and A1519) in the loop of a conserved hairpin near the 3'-end of 16S rRNA in the 30S particle. May play a critical role in biogenesis of 30S subunits. This is Ribosomal RNA small subunit methyltransferase A from Escherichia coli O157:H7.